Consider the following 135-residue polypeptide: MKAGVAPNGRPYQVLIAENSRFQAKQLAQILESEGYQVIGFAENGKELVKLYDEHRLVDLITLDLNLPVMDGYATFFEIKGKGVLPRIVIVSEENTPAVLKNLIDEGAMDYIPKPIKREKILEKVNAAIKKVPKV.

In terms of domain architecture, Response regulatory spans 13–129 (QVLIAENSRF…KILEKVNAAI (117 aa)). D64 is modified (4-aspartylphosphate).

This is an uncharacterized protein from Leptospira interrogans serogroup Icterohaemorrhagiae serovar copenhageni (strain Fiocruz L1-130).